We begin with the raw amino-acid sequence, 380 residues long: MESPIQIFRGDPGPTCSPSACLLPNSSSWFPNWAESDSNGSVGSEDQQLESAHISPAIPVIITAVYSVVFVVGLVGNSLVMFVIIRYTKMKTATNIYIFNLALADALVTTTMPFQSAVYLMNSWPFGDVLCKIVISIDYYNMFTSIFTLTMMSVDRYIAVCHPVKALDFRTPLKAKIINICIWLLASSVGISAIVLGGTKVREDVDVIECSLQFPDDEYSWWDLFMKICVFVFAFVIPVLIIIVCYTLMILRLKSVRLLSGSREKDRNLRRITKLVLVVVAVFIICWTPIHIFILVEALGSTSHSTAALSSYYFCIALGYTNSSLNPVLYAFLDENFKRCFRDFCFPIKMRMERQSTNRVRNTVQDPASMRDVGGMNKPV.

At 1 to 57 (MESPIQIFRGDPGPTCSPSACLLPNSSSWFPNWAESDSNGSVGSEDQQLESAHISPA) the chain is on the extracellular side. 2 N-linked (GlcNAc...) asparagine glycosylation sites follow: Asn25 and Asn39. Residues 58-85 (IPVIITAVYSVVFVVGLVGNSLVMFVII) form a helical membrane-spanning segment. Residues 86–95 (RYTKMKTATN) lie on the Cytoplasmic side of the membrane. The chain crosses the membrane as a helical span at residues 96–119 (IYIFNLALADALVTTTMPFQSAVY). Over 120-132 (LMNSWPFGDVLCK) the chain is Extracellular. Residues Cys131 and Cys210 are joined by a disulfide bond. Residues 133–154 (IVISIDYYNMFTSIFTLTMMSV) traverse the membrane as a helical segment. Over 155–173 (DRYIAVCHPVKALDFRTPL) the chain is Cytoplasmic. The chain crosses the membrane as a helical span at residues 174-196 (KAKIINICIWLLASSVGISAIVL). At 197–222 (GGTKVREDVDVIECSLQFPDDEYSWW) the chain is on the extracellular side. The helical transmembrane segment at 223-247 (DLFMKICVFVFAFVIPVLIIIVCYT) threads the bilayer. Residues 248 to 274 (LMILRLKSVRLLSGSREKDRNLRRITK) lie on the Cytoplasmic side of the membrane. The helical transmembrane segment at 275–296 (LVLVVVAVFIICWTPIHIFILV) threads the bilayer. Residues 297-311 (EALGSTSHSTAALSS) are Extracellular-facing. The helical transmembrane segment at 312–333 (YYFCIALGYTNSSLNPVLYAFL) threads the bilayer. Residues 334 to 380 (DENFKRCFRDFCFPIKMRMERQSTNRVRNTVQDPASMRDVGGMNKPV) lie on the Cytoplasmic side of the membrane. Cys345 carries S-palmitoyl cysteine lipidation.

This sequence belongs to the G-protein coupled receptor 1 family. In terms of assembly, interacts with NHERF1. Interacts with GABARAPL1. Detected in brain (at protein level). Brain (neocortex, hippocampus, amygdala, medial habenula, hypothalamus, locus ceruleus, and parabrachial nucleus).

It is found in the cell membrane. Functionally, G-protein coupled opioid receptor that functions as a receptor for endogenous alpha-neoendorphins and dynorphins, but has low affinity for beta-endorphins. Also functions as a receptor for various synthetic opioids and for the psychoactive diterpene salvinorin A. Ligand binding causes a conformation change that triggers signaling via guanine nucleotide-binding proteins (G proteins) and modulates the activity of down-stream effectors, such as adenylate cyclase. Signaling leads to the inhibition of adenylate cyclase activity. Inhibits neurotransmitter release by reducing calcium ion currents and increasing potassium ion conductance. Plays a role in the perception of pain. Plays a role in mediating reduced physical activity upon treatment with synthetic opioids. Plays a role in the regulation of salivation in response to synthetic opioids. May play a role in arousal and regulation of autonomic and neuroendocrine functions. The chain is Kappa-type opioid receptor (Oprk1) from Mus musculus (Mouse).